The primary structure comprises 833 residues: Leucine--tRNA ligase (833 aa).

The 'HIGH' region signature appears at 41-52; it reads PYPSGAGLHVGH. The 'KMSKS' region signature appears at 610–614; that stretch reads KMSKS. Lys-613 is an ATP binding site.

This sequence belongs to the class-I aminoacyl-tRNA synthetase family.

The protein resides in the cytoplasm. The enzyme catalyses tRNA(Leu) + L-leucine + ATP = L-leucyl-tRNA(Leu) + AMP + diphosphate. The chain is Leucine--tRNA ligase from Streptococcus sanguinis (strain SK36).